We begin with the raw amino-acid sequence, 836 residues long: Lon protease (836 aa).

Positions 41-233 (LPVLPLRNTV…RLIHFLNREV (193 aa)) constitute a Lon N-terminal domain. 385–392 (GPPGVGKT) contributes to the ATP binding site. Residues 627–811 (VMLSGVAVGL…DDLIDYVLEP (185 aa)) form the Lon proteolytic domain. Catalysis depends on residues S714 and K757. The disordered stretch occupies residues 816–836 (APQFKVEDKDHTPETTGNESE).

Belongs to the peptidase S16 family. As to quaternary structure, homohexamer. Organized in a ring with a central cavity.

The protein resides in the cytoplasm. The enzyme catalyses Hydrolysis of proteins in presence of ATP.. Its function is as follows. ATP-dependent serine protease that mediates the selective degradation of mutant and abnormal proteins as well as certain short-lived regulatory proteins. Required for cellular homeostasis and for survival from DNA damage and developmental changes induced by stress. Degrades polypeptides processively to yield small peptide fragments that are 5 to 10 amino acids long. Binds to DNA in a double-stranded, site-specific manner. This is Lon protease from Chloroherpeton thalassium (strain ATCC 35110 / GB-78).